Reading from the N-terminus, the 137-residue chain is ATP synthase epsilon chain, chloroplastic (137 aa).

The protein belongs to the ATPase epsilon chain family. In terms of assembly, F-type ATPases have 2 components, CF(1) - the catalytic core - and CF(0) - the membrane proton channel. CF(1) has five subunits: alpha(3), beta(3), gamma(1), delta(1), epsilon(1). CF(0) has three main subunits: a, b and c.

The protein resides in the plastid. It localises to the chloroplast thylakoid membrane. In terms of biological role, produces ATP from ADP in the presence of a proton gradient across the membrane. In Sorghum bicolor (Sorghum), this protein is ATP synthase epsilon chain, chloroplastic.